Reading from the N-terminus, the 532-residue chain is Glutamate--cysteine ligase (532 aa).

The protein belongs to the glutamate--cysteine ligase type 1 family. Type 1 subfamily.

It catalyses the reaction L-cysteine + L-glutamate + ATP = gamma-L-glutamyl-L-cysteine + ADP + phosphate + H(+). It participates in sulfur metabolism; glutathione biosynthesis; glutathione from L-cysteine and L-glutamate: step 1/2. The sequence is that of Glutamate--cysteine ligase from Pseudomonas fluorescens (strain ATCC BAA-477 / NRRL B-23932 / Pf-5).